Reading from the N-terminus, the 347-residue chain is N-acetyl-gamma-glutamyl-phosphate reductase (347 aa).

Residue Cys151 is part of the active site.

The protein belongs to the NAGSA dehydrogenase family. Type 1 subfamily.

The protein resides in the cytoplasm. The enzyme catalyses N-acetyl-L-glutamate 5-semialdehyde + phosphate + NADP(+) = N-acetyl-L-glutamyl 5-phosphate + NADPH + H(+). It functions in the pathway amino-acid biosynthesis; L-arginine biosynthesis; N(2)-acetyl-L-ornithine from L-glutamate: step 3/4. Functionally, catalyzes the NADPH-dependent reduction of N-acetyl-5-glutamyl phosphate to yield N-acetyl-L-glutamate 5-semialdehyde. The sequence is that of N-acetyl-gamma-glutamyl-phosphate reductase from Corynebacterium glutamicum (strain R).